A 390-amino-acid polypeptide reads, in one-letter code: 5-hydroxytryptamine receptor 1B (390 aa).

Residues 1 to 46 (MEEPGAQCAPPPPAGSETWVPQANLSSAPSQNCSAKDYIYQDSISL) are Extracellular-facing. Asn-24 and Asn-32 each carry an N-linked (GlcNAc...) asparagine glycan. The chain crosses the membrane as a helical span at residues 47-72 (PWKVLLVMLLALITLATTLSNAFVIA). Residues 73-86 (TVYRTRKLHTPANY) lie on the Cytoplasmic side of the membrane. A helical membrane pass occupies residues 87-111 (LIASLAVTDLLVSILVMPISTMYTV). At 112–119 (TGRWTLGQ) the chain is on the extracellular side. Residues 120–145 (VVCDFWLSSDITCCTASILHLCVIAL) traverse the membrane as a helical segment. A disulfide bridge connects residues Cys-122 and Cys-199. Ergotamine-binding residues include Asp-129 and Thr-134. A DRY motif; important for ligand-induced conformation changes and signaling motif is present at residues 146–148 (DRY). The Cytoplasmic portion of the chain corresponds to 146–165 (DRYWAITDAVEYSAKRTPKR). The helical transmembrane segment at 166–184 (AAVMIALVWVFSISISLPP) threads the bilayer. Over 185-205 (FFWRQAKAEEEVSECVVNTDH) the chain is Extracellular. Val-201 provides a ligand contact to ergotamine. A helical membrane pass occupies residues 206–229 (ILYTVYSTVGAFYFPTLLLIALYG). The Cytoplasmic portion of the chain corresponds to 230–315 (RIYVEARSRI…AARERKATKT (86 aa)). Residues 259–272 (DSPGSTSSVTSINS) are compositionally biased toward polar residues. The segment at 259 to 281 (DSPGSTSSVTSINSRVPDVPSES) is disordered. Residues 316 to 337 (LGIILGAFIVCWLPFFIISLVM) form a helical membrane-spanning segment. Residues 338–347 (PICKDACWFH) lie on the Extracellular side of the membrane. Residues 348 to 370 (LAIFDFFTWLGYLNSLINPIIYT) traverse the membrane as a helical segment. Residues 365–369 (NPIIY) carry the NPxxY motif; important for ligand-induced conformation changes and signaling motif. At 371–390 (MSNEDFKQAFHKLIRFKCTS) the chain is on the cytoplasmic side. Residue Cys-388 is the site of S-palmitoyl cysteine attachment.

Belongs to the G-protein coupled receptor 1 family. Homodimer. Heterodimer with HTR1D. Phosphorylated. Desensitization of the receptor may be mediated by its phosphorylation. Post-translationally, palmitoylated. As to expression, detected in cerebral artery smooth muscle cells (at protein level). Detected in brain cortex, striatum, amygdala, medulla, hippocampus, caudate nucleus and putamen.

Its subcellular location is the cell membrane. In terms of biological role, G-protein coupled receptor for 5-hydroxytryptamine (serotonin). Also functions as a receptor for ergot alkaloid derivatives, various anxiolytic and antidepressant drugs and other psychoactive substances, such as lysergic acid diethylamide (LSD). Ligand binding causes a conformation change that triggers signaling via guanine nucleotide-binding proteins (G proteins) and modulates the activity of downstream effectors, such as adenylate cyclase. HTR1B is coupled to G(i)/G(o) G alpha proteins and mediates inhibitory neurotransmission by inhibiting adenylate cyclase activity. Arrestin family members inhibit signaling via G proteins and mediate activation of alternative signaling pathways. Regulates the release of 5-hydroxytryptamine, dopamine and acetylcholine in the brain, and thereby affects neural activity, nociceptive processing, pain perception, mood and behavior. Besides, plays a role in vasoconstriction of cerebral arteries. This chain is 5-hydroxytryptamine receptor 1B, found in Homo sapiens (Human).